A 191-amino-acid polypeptide reads, in one-letter code: INO80 complex subunit C (191 aa).

Residues 1 to 41 form a disordered region; it reads MAAQIPIVAATSTPTVARNSKKRPASPSHNSSGGGYGASKK.

As to quaternary structure, component of the chromatin remodeling INO80 complex; specifically part of a complex module associated with the helicase ATP-binding and the helicase C-terminal domain of INO80. Component of some MLL1/MLL complex, at least composed of the core components KMT2A/MLL1, ASH2L, HCFC1/HCF1, WDR5 and RBBP5, as well as the facultative components BACC1, CHD8, E2F6, HSP70, INO80C, KANSL1, LAS1L, MAX, MCRS1, MGA, MYST1/MOF, PELP1, PHF20, PRP31, RING2, RUVB1/TIP49A, RUVB2/TIP49B, SENP3, TAF1, TAF4, TAF6, TAF7, TAF9 and TEX10.

Its subcellular location is the nucleus. In terms of biological role, proposed core component of the chromatin remodeling INO80 complex which is involved in transcriptional regulation, DNA replication and probably DNA repair. This is INO80 complex subunit C (Ino80c) from Rattus norvegicus (Rat).